The sequence spans 400 residues: DNA primase large subunit PriL (400 aa).

Residues cysteine 247, cysteine 356, cysteine 367, and cysteine 373 each contribute to the [4Fe-4S] cluster site.

Belongs to the eukaryotic-type primase large subunit family. Heterodimer of a small subunit (PriS) and a large subunit (PriL). Requires [4Fe-4S] cluster as cofactor.

Functionally, regulatory subunit of DNA primase, an RNA polymerase that catalyzes the synthesis of short RNA molecules used as primers for DNA polymerase during DNA replication. Stabilizes and modulates the activity of the small subunit, increasing the rate of DNA synthesis, and conferring RNA synthesis capability. The DNA polymerase activity may enable DNA primase to also catalyze primer extension after primer synthesis. May also play a role in DNA repair. The protein is DNA primase large subunit PriL of Thermococcus kodakarensis (strain ATCC BAA-918 / JCM 12380 / KOD1) (Pyrococcus kodakaraensis (strain KOD1)).